The following is a 211-amino-acid chain: Redox-sensing transcriptional repressor Rex (211 aa).

The segment at residues 18-57 (LYYRFIESLHAAGKQRVSSTELSQAVKVDSATIRRDFSYF) is a DNA-binding region (H-T-H motif). 92 to 97 (GVGNLG) is a binding site for NAD(+).

It belongs to the transcriptional regulatory Rex family. Homodimer.

It localises to the cytoplasm. In terms of biological role, modulates transcription in response to changes in cellular NADH/NAD(+) redox state. The chain is Redox-sensing transcriptional repressor Rex from Shouchella clausii (strain KSM-K16) (Alkalihalobacillus clausii).